The sequence spans 273 residues: Undecaprenyl-diphosphatase (273 aa).

Transmembrane regions (helical) follow at residues 13–35 (GLVE…VFGN), 45–62 (VFEI…VFEY), 82–102 (FVLN…LFGK), 108–128 (LFNP…ILWV), 144–164 (ALRP…LIPG), 186–206 (TEFS…YDVL), 219–239 (LILI…KALL), and 250–270 (FAYY…SGWI).

It belongs to the UppP family.

Its subcellular location is the cell inner membrane. The catalysed reaction is di-trans,octa-cis-undecaprenyl diphosphate + H2O = di-trans,octa-cis-undecaprenyl phosphate + phosphate + H(+). Its function is as follows. Catalyzes the dephosphorylation of undecaprenyl diphosphate (UPP). Confers resistance to bacitracin. This chain is Undecaprenyl-diphosphatase, found in Neisseria meningitidis serogroup C (strain 053442).